Here is a 576-residue protein sequence, read N- to C-terminus: 2-succinyl-5-enolpyruvyl-6-hydroxy-3-cyclohexene-1-carboxylate synthase (576 aa).

The protein belongs to the TPP enzyme family. MenD subfamily. Homodimer. Mg(2+) serves as cofactor. Mn(2+) is required as a cofactor. Requires thiamine diphosphate as cofactor.

The enzyme catalyses isochorismate + 2-oxoglutarate + H(+) = 5-enolpyruvoyl-6-hydroxy-2-succinyl-cyclohex-3-ene-1-carboxylate + CO2. Its pathway is quinol/quinone metabolism; 1,4-dihydroxy-2-naphthoate biosynthesis; 1,4-dihydroxy-2-naphthoate from chorismate: step 2/7. It participates in quinol/quinone metabolism; menaquinone biosynthesis. Its function is as follows. Catalyzes the thiamine diphosphate-dependent decarboxylation of 2-oxoglutarate and the subsequent addition of the resulting succinic semialdehyde-thiamine pyrophosphate anion to isochorismate to yield 2-succinyl-5-enolpyruvyl-6-hydroxy-3-cyclohexene-1-carboxylate (SEPHCHC). This is 2-succinyl-5-enolpyruvyl-6-hydroxy-3-cyclohexene-1-carboxylate synthase from Photobacterium profundum (strain SS9).